The sequence spans 577 residues: MNIQALLSEKVSQAMIAAGAPADCEPQVRQSAKVQFGDYQANGMMAVAKKLGMAPRQLAEQVLTHLDLSGIASKVEIAGPGFINIFLEPAFLSEQVQQALTSDRLGVSQPTRQTIVVDYSAPNVAKEMHVGHLRSTIIGDAAVRTLEFLGHHVIRANHVGDWGTQFGMLIAWLEKQQQENAGDMALADLEGFYRDAKKHYDEDEAFAERARNYVVKLQSGDTYFREMWRKLVDITMTQNQITYDRLNVTLTRDDVMGESLYNPMLPGIVADLKAKGLAVESEGATVVFLDEFKNKEGDPMGVIIQKKDGGYLYTTTDIACAKYRYETLHADRVLYYIDSRQHQHLMQAWTIVRKAGYVPDSVPLEHHMFGMMLGKDGKPFKTRAGGTVKLADLLDEALERARRLVAEKNPDMSADELEKLANAVGIGAVKYADLSKNRTTDYIFDWDNMLAFEGNTAPYMQYAYTRVLSVFRKADIDEQALASAPVIISEDREAQLAARLLQFEETLTVVAREGTPHVMCAYLYDVAGLFSGFYEHCPILSAENDAVRNSRLKLAQLTAKTLKLGLDTLGIETVERM.

A 'HIGH' region motif is present at residues 122–132; it reads PNVAKEMHVGH.

Belongs to the class-I aminoacyl-tRNA synthetase family. Monomer.

The protein localises to the cytoplasm. The enzyme catalyses tRNA(Arg) + L-arginine + ATP = L-arginyl-tRNA(Arg) + AMP + diphosphate. This is Arginine--tRNA ligase from Salmonella gallinarum (strain 287/91 / NCTC 13346).